The sequence spans 651 residues: Beta-mannosyltransferase 7 (651 aa).

Residues 1–19 (MKLEMSSYLHKVPNTGITN) are Cytoplasmic-facing. A helical membrane pass occupies residues 20–42 (LSNSKSIVFIMFCATLLFIITSS). Over 43–651 (RYLTGSESLG…VKIDEKSEET (609 aa)) the chain is Extracellular. 2 N-linked (GlcNAc...) asparagine glycosylation sites follow: N271 and N423.

The protein belongs to the BMT family.

The protein localises to the membrane. Beta-mannosyltransferase involved in cell wall biosynthesis through beta-1,2-mannosylation of cell wall phosphopeptidomannan. In Candida albicans (strain SC5314 / ATCC MYA-2876) (Yeast), this protein is Beta-mannosyltransferase 7 (BMT7).